A 95-amino-acid chain; its full sequence is UPF0235 protein Ssed_1229 (95 aa).

Belongs to the UPF0235 family.

This is UPF0235 protein Ssed_1229 from Shewanella sediminis (strain HAW-EB3).